A 193-amino-acid chain; its full sequence is Ribosomal RNA large subunit methyltransferase E (193 aa).

S-adenosyl-L-methionine contacts are provided by G49, F51, D69, D86, and D106. K146 functions as the Proton acceptor in the catalytic mechanism.

This sequence belongs to the class I-like SAM-binding methyltransferase superfamily. RNA methyltransferase RlmE family.

It localises to the cytoplasm. The enzyme catalyses uridine(2552) in 23S rRNA + S-adenosyl-L-methionine = 2'-O-methyluridine(2552) in 23S rRNA + S-adenosyl-L-homocysteine + H(+). In terms of biological role, specifically methylates the uridine in position 2552 of 23S rRNA at the 2'-O position of the ribose in the fully assembled 50S ribosomal subunit. This is Ribosomal RNA large subunit methyltransferase E from Brachyspira hyodysenteriae (strain ATCC 49526 / WA1).